A 235-amino-acid polypeptide reads, in one-letter code: STARD3 N-terminal-like protein (235 aa).

M1 is modified (N-acetylmethionine). A disordered region spans residues 1–20; it reads MNHLPEHMENTLTGSQSSHA. At 1 to 53 the chain is on the cytoplasmic side; sequence MNHLPEHMENTLTGSQSSHASLRDIHSINPAQLMARIESYEGREKKGISDVRR. Over residues 10–20 the composition is skewed to polar residues; the sequence is NTLTGSQSSHA. A phosphoserine mark is found at S15, S21, and S27. The MENTAL domain maps to 48–218; that stretch reads ISDVRRTFCL…YSPPESEAGS (171 aa). Residues 54-74 form a helical membrane-spanning segment; that stretch reads TFCLFVTFDLLFVTLLWIIEL. Residues 75–97 are Extracellular-facing; the sequence is NVNGGIENTLKKEVIHYDYYSSY. A helical transmembrane segment spans residues 98–118; sequence FDIFLLAVFRFKVLILGYAVC. At 119–122 the chain is on the cytoplasmic side; the sequence is RLRH. Residues 123–143 form a helical membrane-spanning segment; it reads WWAIALTTAVTSAFLLAKVIL. The Extracellular segment spans residues 144–150; the sequence is SKLFSQG. A helical transmembrane segment spans residues 151–171; the sequence is AFGYVLPIISFILAWIETWFL. Residues 172–235 lie on the Cytoplasmic side of the membrane; it reads DFKVLPQEAE…QESEKPLLEL (64 aa). S193 is subject to Phosphoserine. Residues 202 to 235 form a disordered region; the sequence is GLSDGQFYSPPESEAGSEEEAEEKQESEKPLLEL. Residues 208-213 carry the FFAT motif; it reads FYSPPE. A compositionally biased stretch (basic and acidic residues) spans 225 to 235; it reads KQESEKPLLEL.

The protein belongs to the STARD3 family. Homodimer. Interacts (via the MENTAL domain) with STARD3NL. Interacts (via FFAT motif) with VAPA. Interacts (via FFAT motif) with VAPB. Interacts (via FFAT motif) with MOSPD2 (via MSP domain).

The protein resides in the late endosome membrane. Its function is as follows. Tethering protein that creates contact site between the endoplasmic reticulum and late endosomes: localizes to late endosome membranes and contacts the endoplasmic reticulum via interaction with VAPA and VAPB. The chain is STARD3 N-terminal-like protein from Mus musculus (Mouse).